Reading from the N-terminus, the 434-residue chain is Trigger factor (434 aa).

Residues 161–246 (EDRVTVDFTG…LKKVEQRELP (86 aa)) form the PPIase FKBP-type domain.

The protein belongs to the FKBP-type PPIase family. Tig subfamily.

Its subcellular location is the cytoplasm. It catalyses the reaction [protein]-peptidylproline (omega=180) = [protein]-peptidylproline (omega=0). In terms of biological role, involved in protein export. Acts as a chaperone by maintaining the newly synthesized protein in an open conformation. Functions as a peptidyl-prolyl cis-trans isomerase. This Sodalis glossinidius (strain morsitans) protein is Trigger factor.